Here is a 1207-residue protein sequence, read N- to C-terminus: Plasma membrane calcium-transporting ATPase 4 (1207 aa).

Residues 1–100 (MTNPTEHTLP…KTFLELVWEA (100 aa)) lie on the Cytoplasmic side of the membrane. At serine 13 the chain carries Phosphoserine. The chain crosses the membrane as a helical span at residues 101–121 (LQDVTLIILEIAAIISLVLSF). Topologically, residues 122-147 (YRPPGGENEQCGLAVTSPEDEGEAEA) are extracellular. The chain crosses the membrane as a helical span at residues 148 to 168 (GWIEGAAILFSVIIVVLVTAF). At 169–368 (NDWSKEKQFR…LAVQIGKAGL (200 aa)) the chain is on the cytoplasmic side. Residues 294–317 (EEEKKKKGKKQGVPENRNKAKTQD) form a disordered region. Phosphoserine is present on residues serine 328 and serine 334. A helical transmembrane segment spans residues 369 to 389 (IMSAITVLILILYFVIDNFVI). Residues 390 to 408 (QRRPWLAECTPIYVQYFVK) lie on the Extracellular side of the membrane. Residues 409-429 (FFIIGVTVLVVAVPEGLPLAV) traverse the membrane as a helical segment. Over 430 to 843 (TISLAYSVKK…RNVYDSISKF (414 aa)) the chain is Cytoplasmic. Aspartate 465 functions as the 4-aspartylphosphate intermediate in the catalytic mechanism. Positions 785 and 789 each coordinate Mg(2+). A helical transmembrane segment spans residues 844 to 864 (LQFQLTVNVVAVIVAFTGACI). Topologically, residues 865–871 (TQDSPLK) are extracellular. A helical membrane pass occupies residues 872-892 (AVQMLWVNLIMDTFASLALAT). Topologically, residues 893–918 (EPPTDSLLKRRPYGRNKPLISRTMMK) are cytoplasmic. A helical transmembrane segment spans residues 919 to 939 (NILGHAVYQLTVIFFLVFAGE). Topologically, residues 940–957 (KFFDIDSGRRAPLHSPPS) are extracellular. The chain crosses the membrane as a helical span at residues 958–977 (QHYTIIFNTFVLMQLFNEIN). Residues 978–994 (SRKIHGERNVFSGIFRN) are Cytoplasmic-facing. Residues 995–1015 (LIFCSVVLGTFISQIIIVEFG) traverse the membrane as a helical segment. At 1016 to 1028 (GKPFSCTKLTLSQ) the chain is on the extracellular side. Residues 1029–1049 (WFWCLFIGIGELLWGQVISTI) form a helical membrane-spanning segment. Topologically, residues 1050-1207 (PTQSLKFLKE…SPLHSLETSV (158 aa)) are cytoplasmic. The interval 1086-1103 (LRRGQILWFRGLNRIQTQ) is calmodulin-binding subdomain A. Threonine 1102 is modified (phosphothreonine; by PKC). The interval 1104-1113 (IKVVKAFHSS) is calmodulin-binding subdomain B. The segment at 1159–1181 (VSKPGTKTSSLDGEVTPQTNKNN) is disordered. Residues 1163 to 1181 (GTKTSSLDGEVTPQTNKNN) are compositionally biased toward polar residues.

The protein belongs to the cation transport ATPase (P-type) (TC 3.A.3) family. Type IIB subfamily. Interacts with PDZD11. Interacts with SLC35G1 and STIM1. Interacts with calmodulin. Isoform 1 is detected in brain, heart, liver, testis and epididymis. Isoform 2 is detected in brain (at protein level), heart, seminal vesicle and epididymis. There is a shift in expression from isoform 1 to isoform 2 along the length of the epididymis from caput to cauda (at protein level).

The protein localises to the cell membrane. Its subcellular location is the cell projection. It localises to the cilium. It is found in the flagellum membrane. The enzyme catalyses Ca(2+)(in) + ATP + H2O = Ca(2+)(out) + ADP + phosphate + H(+). With respect to regulation, activated by calcium/calmodulin. Its function is as follows. Calcium/calmodulin-regulated and magnesium-dependent enzyme that catalyzes the hydrolysis of ATP coupled with the transport of calcium out of the cell. By regulating sperm cells calcium homeostasis, may play a role in sperm motility. In Bos taurus (Bovine), this protein is Plasma membrane calcium-transporting ATPase 4.